We begin with the raw amino-acid sequence, 954 residues long: Glycine dehydrogenase (decarboxylating) (954 aa).

N6-(pyridoxal phosphate)lysine is present on K704.

This sequence belongs to the GcvP family. As to quaternary structure, the glycine cleavage system is composed of four proteins: P, T, L and H. Pyridoxal 5'-phosphate is required as a cofactor.

The catalysed reaction is N(6)-[(R)-lipoyl]-L-lysyl-[glycine-cleavage complex H protein] + glycine + H(+) = N(6)-[(R)-S(8)-aminomethyldihydrolipoyl]-L-lysyl-[glycine-cleavage complex H protein] + CO2. In terms of biological role, the glycine cleavage system catalyzes the degradation of glycine. The P protein binds the alpha-amino group of glycine through its pyridoxal phosphate cofactor; CO(2) is released and the remaining methylamine moiety is then transferred to the lipoamide cofactor of the H protein. This is Glycine dehydrogenase (decarboxylating) from Rhizobium etli (strain ATCC 51251 / DSM 11541 / JCM 21823 / NBRC 15573 / CFN 42).